A 194-amino-acid polypeptide reads, in one-letter code: Adenylate kinase (194 aa).

8–16 provides a ligand contact to ATP; that stretch reads GIPGVGKTT.

Belongs to the archaeal adenylate kinase family.

The protein localises to the cytoplasm. The enzyme catalyses AMP + ATP = 2 ADP. This Sulfurisphaera tokodaii (strain DSM 16993 / JCM 10545 / NBRC 100140 / 7) (Sulfolobus tokodaii) protein is Adenylate kinase (adkA).